Here is a 301-residue protein sequence, read N- to C-terminus: Mitochondrial import receptor subunit TOM40 homolog (301 aa).

The span at 1 to 19 (MATPTESELASPIPQTNPG) shows a compositional bias: polar residues. The tract at residues 1–20 (MATPTESELASPIPQTNPGS) is disordered.

Belongs to the Tom40 family. In terms of assembly, forms part of the preprotein translocase complex of the outer mitochondrial membrane (TOM complex). Interacts with mitochondrial targeting sequences. In terms of tissue distribution, ubiquitously expressed, but highly expressed in the pharyngeal muscles, the nerve ring, the intestine, gonadal sheath and in the tail hypodermis.

Its subcellular location is the mitochondrion outer membrane. Channel-forming protein essential for import of protein precursors into mitochondria. Specifically required for nnt-1 accumulation in the mitochondria and may be involved in the secretion of daf-28/insulin from the mitochondria. Required for embryonic and larval development. This Caenorhabditis elegans protein is Mitochondrial import receptor subunit TOM40 homolog.